The sequence spans 251 residues: Triosephosphate isomerase (251 aa).

Asn-9–Lys-11 is a substrate binding site. His-93 serves as the catalytic Electrophile. Catalysis depends on Glu-163, which acts as the Proton acceptor. Residues Gly-169, Ser-209, and Gly-230–Gly-231 each bind substrate.

It belongs to the triosephosphate isomerase family. As to quaternary structure, homodimer.

The protein resides in the cytoplasm. It carries out the reaction D-glyceraldehyde 3-phosphate = dihydroxyacetone phosphate. It participates in carbohydrate biosynthesis; gluconeogenesis. The protein operates within carbohydrate degradation; glycolysis; D-glyceraldehyde 3-phosphate from glycerone phosphate: step 1/1. Functionally, involved in the gluconeogenesis. Catalyzes stereospecifically the conversion of dihydroxyacetone phosphate (DHAP) to D-glyceraldehyde-3-phosphate (G3P). This chain is Triosephosphate isomerase, found in Ruegeria pomeroyi (strain ATCC 700808 / DSM 15171 / DSS-3) (Silicibacter pomeroyi).